The sequence spans 394 residues: Small ribosomal subunit protein uS2m (394 aa).

The transit peptide at 1-25 (MQRHVFARNFRRLSLLRNPSLTKRF) directs the protein to the mitochondrion.

The protein belongs to the universal ribosomal protein uS2 family. Component of the mitochondrial small ribosomal subunit (mt-SSU). Mature yeast 74S mitochondrial ribosomes consist of a small (37S) and a large (54S) subunit. The 37S small subunit contains a 15S ribosomal RNA (15S mt-rRNA) and 34 different proteins. The 54S large subunit contains a 21S rRNA (21S mt-rRNA) and 46 different proteins.

It localises to the mitochondrion. Its function is as follows. Component of the mitochondrial ribosome (mitoribosome), a dedicated translation machinery responsible for the synthesis of mitochondrial genome-encoded proteins, including at least some of the essential transmembrane subunits of the mitochondrial respiratory chain. The mitoribosomes are attached to the mitochondrial inner membrane and translation products are cotranslationally integrated into the membrane. The sequence is that of Small ribosomal subunit protein uS2m (MRP4) from Saccharomyces cerevisiae (strain ATCC 204508 / S288c) (Baker's yeast).